A 503-amino-acid chain; its full sequence is Beta-mannosyltransferase 4 (503 aa).

The Cytoplasmic portion of the chain corresponds to 1–24; sequence MKLDTQQISHLLSRQMYHLAPRKK. Residues 25-45 form a helical membrane-spanning segment; the sequence is LLIWGGSLGFVLLLLIVASSH. Topologically, residues 46-503 are extracellular; that stretch reads QRIRSTILHR…QYCQRYGELH (458 aa). Asn-468 carries an N-linked (GlcNAc...) asparagine glycan.

It belongs to the BMT family.

The protein localises to the membrane. Beta-mannosyltransferase involved in cell wall biosynthesis. Responsible for addition of a hexose to the beta-mannose chain. The chain is Beta-mannosyltransferase 4 (BMT4) from Komagataella phaffii (strain ATCC 76273 / CBS 7435 / CECT 11047 / NRRL Y-11430 / Wegner 21-1) (Yeast).